Consider the following 478-residue polypeptide: ATP-dependent RNA helicase DDX19A (478 aa).

Ala2 bears the N-acetylalanine mark. The segment at 2–299 is N-terminal lobe; sequence ATDSWALAVD…DPNIIKLKRE (298 aa). A Glycyl lysine isopeptide (Lys-Gly) (interchain with G-Cter in SUMO1); alternate cross-link involves residue Lys26. Lys26 is covalently cross-linked (Glycyl lysine isopeptide (Lys-Gly) (interchain with G-Cter in SUMO2); alternate). The interval 31 to 55 is disordered; it reads KPDTNGVIKTNATPEKTDEEEKEDR. An N-terminal helix region spans residues 54–67; that stretch reads DRAAQSLLNKLIRS. A Q motif motif is present at residues 91–119; sequence KSFEELRLKPQLLQGVYAMGFNRPSKIQE. ATP contacts are provided by residues Gln118 and 137 to 144; that span reads SQSGTGKT. Residues 124–294 form the Helicase ATP-binding domain; the sequence is MMLAEPPQNL…QKVVPDPNII (171 aa). Residues 241-244 carry the DEAD box motif; it reads DEAD. The interval 300–478 is C-terminal lobe; it reads EETLDTIKQY…DLDEIEKIAN (179 aa). The Helicase C-terminal domain occupies 305-473; the sequence is TIKQYYVLCN…RLDTDDLDEI (169 aa). 2 residues coordinate ATP: Arg428 and Arg431.

It belongs to the DEAD box helicase family. DDX19/DBP5 subfamily.

It localises to the cytoplasm. The protein localises to the nucleus. It is found in the nucleoplasm. The catalysed reaction is ATP + H2O = ADP + phosphate + H(+). Functionally, ATP-dependent RNA helicase involved in mRNA export from the nucleus. Rather than unwinding RNA duplexes, DDX19 functions as a remodeler of ribonucleoprotein particles, whereby proteins bound to nuclear mRNA are dissociated and replaced by cytoplasmic mRNA binding proteins. This chain is ATP-dependent RNA helicase DDX19A (DDX19A), found in Bos taurus (Bovine).